We begin with the raw amino-acid sequence, 303 residues long: Counting factor 50 (303 aa).

The first 24 residues, 1–24 (MNKMNNIFLIISSIILSIVIFVSG), serve as a signal peptide directing secretion. The region spanning 28–240 (IDFSSEISVG…CSTSSGSASG (213 aa)) is the Ch-type lysozyme domain. An N-linked (GlcNAc...) asparagine glycan is attached at Asn67. Glu125 is a catalytic residue. Asn170 carries N-linked (GlcNAc...) asparagine glycosylation. An S-G-S motif repeats region spans residues 226–303 (GSGSGCSTSS…GSGTGSGSSI (78 aa)). Over residues 236–292 (GSASGSASGSASGSASGSNSGSSNSGSSNSGSSNSGSNSGSSNSGSGNSGSSNSGSA) the composition is skewed to low complexity. A disordered region spans residues 236–303 (GSASGSASGS…GSGTGSGSSI (68 aa)). Positions 293–303 (SGSGTGSGSSI) are enriched in gly residues.

This sequence belongs to the glycosyl hydrolase 25 family. As to quaternary structure, monomer. Component of the counting factor (CF) complex, which includes cf60, cf50, cf45-1 and ctnA.

Its subcellular location is the secreted. It catalyses the reaction Hydrolysis of (1-&gt;4)-beta-linkages between N-acetylmuramic acid and N-acetyl-D-glucosamine residues in a peptidoglycan and between N-acetyl-D-glucosamine residues in chitodextrins.. In terms of biological role, cell-counting factor that limits the maximum size of the multicellular structure during aggregation. Has a very low lysozyme activity. This is Counting factor 50 (cf50-1) from Dictyostelium discoideum (Social amoeba).